A 145-amino-acid polypeptide reads, in one-letter code: MIIDITEIMDWIPHRYPFLLVDRVLKIDPNKSITGIKNVTVNEPQFTGHFPARPVMPGVLMVEAMAQLAAILVAKSLGSTKNKEVFLMAIENAKFRRIVQPGDTMHIHVVIDQQRANVWKFSSTVTVEGEIAAESKFTAMIKDKA.

His49 is an active-site residue.

The protein belongs to the thioester dehydratase family. FabZ subfamily.

Its subcellular location is the cytoplasm. It catalyses the reaction a (3R)-hydroxyacyl-[ACP] = a (2E)-enoyl-[ACP] + H2O. Functionally, involved in unsaturated fatty acids biosynthesis. Catalyzes the dehydration of short chain beta-hydroxyacyl-ACPs and long chain saturated and unsaturated beta-hydroxyacyl-ACPs. The polypeptide is 3-hydroxyacyl-[acyl-carrier-protein] dehydratase FabZ (Rickettsia massiliae (strain Mtu5)).